The chain runs to 157 residues: MRIGHGFDVHKFGGEGPIIIGGVRIPYEQGLLAHSDGDVALHAATDALLGAAALGDIGKLFPDTDPAFKGVDSRKLLREAYSRIREKGYRIGNLDITIIAQAPKMLPHIPQMRVNLAEDLQCHIDDINVKATTTEKLGFVGRKEGIACEAVALLVKE.

Residues Asp-8 and His-10 each coordinate a divalent metal cation. 4-CDP-2-C-methyl-D-erythritol 2-phosphate-binding positions include Asp-8 to His-10 and His-34 to Ser-35. Position 42 (His-42) interacts with a divalent metal cation. Residues Asp-56 to Gly-58, Phe-61 to Asp-65, Ala-100 to Leu-106, Thr-132 to Glu-135, Phe-139, and Arg-142 each bind 4-CDP-2-C-methyl-D-erythritol 2-phosphate.

It belongs to the IspF family. As to quaternary structure, homotrimer. It depends on a divalent metal cation as a cofactor.

It catalyses the reaction 4-CDP-2-C-methyl-D-erythritol 2-phosphate = 2-C-methyl-D-erythritol 2,4-cyclic diphosphate + CMP. The protein operates within isoprenoid biosynthesis; isopentenyl diphosphate biosynthesis via DXP pathway; isopentenyl diphosphate from 1-deoxy-D-xylulose 5-phosphate: step 4/6. In terms of biological role, involved in the biosynthesis of isopentenyl diphosphate (IPP) and dimethylallyl diphosphate (DMAPP), two major building blocks of isoprenoid compounds. Catalyzes the conversion of 4-diphosphocytidyl-2-C-methyl-D-erythritol 2-phosphate (CDP-ME2P) to 2-C-methyl-D-erythritol 2,4-cyclodiphosphate (ME-CPP) with a corresponding release of cytidine 5-monophosphate (CMP). In Photorhabdus laumondii subsp. laumondii (strain DSM 15139 / CIP 105565 / TT01) (Photorhabdus luminescens subsp. laumondii), this protein is 2-C-methyl-D-erythritol 2,4-cyclodiphosphate synthase.